Reading from the N-terminus, the 461-residue chain is CUGBP Elav-like family member 3 (461 aa).

RRM domains follow at residues 7-88 (IKLF…PADS) and 95-175 (RKLF…FADT). A compositionally biased stretch (pro residues) spans 345-358 (PPALVAQQPPPPPQ). Residues 345–375 (PPALVAQQPPPPPQQQQQQQQQQQQREGPDG) are disordered. The span at 359-369 (QQQQQQQQQQQ) shows a compositional bias: low complexity. Residues 376 to 454 (CNIFIYHLPQ…KRLKVQLKRP (79 aa)) form the RRM 3 domain.

It belongs to the CELF/BRUNOL family.

Its subcellular location is the nucleus. It localises to the cytoplasm. Its function is as follows. RNA-binding protein involved in the regulation of pre-mRNA alternative splicing. Mediates exon inclusion and/or exclusion in pre-mRNA that are subject to tissue-specific and developmentally regulated alternative splicing. Specifically activates exon 5 inclusion of cardiac isoforms of TNNT2 during heart remodeling at the juvenile to adult transition. Activates the splicing of MAPT/Tau exon 10. Binds to muscle-specific splicing enhancer (MSE) intronic sites flanking the alternative exon 5 of TNNT2 pre-mRNA. This is CUGBP Elav-like family member 3 (CELF3) from Bos taurus (Bovine).